Here is a 554-residue protein sequence, read N- to C-terminus: Transcription factor 7-like 1-A (554 aa).

The span at 1 to 11 shows a compositional bias: gly residues; the sequence is MPQLNSGGGDE. The interval 1–61 is interaction with CTNNB1-A; sequence MPQLNSGGGD…SENHSSDSDS (61 aa). 3 disordered regions span residues 1 to 73, 183 to 213, and 391 to 475; these read MPQL…REAF, GTPP…PYYP, and WSAR…LTTK. Basic and acidic residues-rich tracts occupy residues 17 to 32 and 52 to 73; these read ELIR…EKSP and SENH…REAF. Residues 109 to 312 form an interaction with AES and TLE4-A region; that stretch reads LGGHYLPNGA…SPNLHTKSNM (204 aa). The HMG box DNA-binding region spans 324-392; sequence IKKPLNAFML…LHSQLYPSWS (69 aa). Over residues 407-416 the composition is skewed to basic and acidic residues; the sequence is KQSPEMETHT. The tract at residues 408-554 is interaction with CTBP-B; that stretch reads QSPEMETHTK…PLSLVTKSSD (147 aa). Positions 445–464 are enriched in low complexity; sequence SPATPSAALASPAAPAATHS. Positions 465 to 474 are enriched in polar residues; the sequence is EQAQPLSLTT.

The protein belongs to the TCF/LEF family. In terms of assembly, interacts with csnk1e, ctnnb1-A, ctbp-B, dact1-A and gsk3b. May interact with ase and tle4-A. Phosphorylated. Phosphorylation by csnk1e promotes binding to ctnnb1-A while phosphorylation by gsk3b may reverse this effect.

It localises to the cytoplasm. The protein localises to the nucleus. In terms of biological role, participates in the Wnt signaling pathway. Binds to DNA and acts as a repressor in the absence of ctnnb1-A and possibly ctnnb1-B, and as an activator in the presence of these proteins. Required early in development for the establishment of the dorsal body axis in response to maternal Wnt signaling. Also required during development of the CNS for the establishment of dorsal-ventral patterning in the prospective diencephalon. This is Transcription factor 7-like 1-A (tcf7l1-a) from Xenopus laevis (African clawed frog).